Here is a 714-residue protein sequence, read N- to C-terminus: ATP-dependent DNA helicase DinG (714 aa).

Residues 17-294 (ALQDQIPDFI…TSMEQFRPKT (278 aa)) form the Helicase ATP-binding domain. 54-61 (APTGVGKT) is a binding site for ATP. Positions 120, 194, 199, and 205 each coordinate [4Fe-4S] cluster. The short motif at 248 to 251 (DEGH) is the DEAH box element. The 182-residue stretch at 517 to 698 (HIAEMAAYFR…VFPIEQPAVP (182 aa)) folds into the Helicase C-terminal domain.

The protein belongs to the helicase family. DinG subfamily. Type 1 sub-subfamily. [4Fe-4S] cluster serves as cofactor.

The catalysed reaction is Couples ATP hydrolysis with the unwinding of duplex DNA at the replication fork by translocating in the 5'-3' direction. This creates two antiparallel DNA single strands (ssDNA). The leading ssDNA polymer is the template for DNA polymerase III holoenzyme which synthesizes a continuous strand.. The enzyme catalyses ATP + H2O = ADP + phosphate + H(+). Its function is as follows. DNA-dependent ATPase and 5'-3' DNA helicase. Unwinds D-loops, R-loops, forked DNA and G-quadruplex DNA. The chain is ATP-dependent DNA helicase DinG from Salmonella choleraesuis (strain SC-B67).